A 1247-amino-acid polypeptide reads, in one-letter code: Leucine-rich repeat-containing protein 53 (1247 aa).

7 LRR repeats span residues 34-55, 58-79, 82-102, 108-129, 132-153, 158-179, and 182-203; these read TTRV…NLSL, NLAL…ALHG, MLRT…TDHT, SLQV…WFRN, GLTR…SFGG, SLRY…AFRP, and QLQE…FTPL. The LRRCT domain occupies 214–271; that stretch reads NQWSCTCDLHPLARFLRNYIKSSAHTLRNAKDLNCQPSTAAVAAAQSVLRLSETNCDS. A helical transmembrane segment spans residues 294–314; sequence LLTVLGFAGAVGLTCLGLVVF. Disordered stretches follow at residues 828–866, 887–927, and 1223–1247; these read SAGH…EDAT, VLPF…SPRN, and ENSA…LETE. Polar residues-rich tracts occupy residues 898 to 927 and 1238 to 1247; these read DQGT…SPRN and YATTSPLETE.

The protein resides in the membrane. This chain is Leucine-rich repeat-containing protein 53 (LRRC53), found in Homo sapiens (Human).